Consider the following 297-residue polypeptide: Mitochondrial citrate transporter A (297 aa).

Solcar repeat units lie at residues proline 12 to leucine 91, proline 102 to methionine 188, and leucine 199 to alanine 286. A run of 6 helical transmembrane segments spans residues isoleucine 18–isoleucine 31, serine 61–arginine 81, isoleucine 99–alanine 119, phenylalanine 160–serine 180, tyrosine 192–glycine 212, and lysine 251–serine 272.

Belongs to the mitochondrial carrier (TC 2.A.29) family.

It is found in the mitochondrion inner membrane. It catalyses the reaction citrate(in) + H(+)(in) = citrate(out) + H(+)(out). Functionally, mitochondrial transporter that mediates citrate export from mitochondria to cytoplasm. Both ctpA, ctpB, and ctpD play important roles in citric acid transport across the mitochondrial membrane and function in a redundant manner. In Aspergillus niger (strain ATCC 1015 / CBS 113.46 / FGSC A1144 / LSHB Ac4 / NCTC 3858a / NRRL 328 / USDA 3528.7), this protein is Mitochondrial citrate transporter A.